Reading from the N-terminus, the 71-residue chain is MPITSKYSDEHVESILTEIAAVLNKHNASPELTLMVVGNIATNVINQNVAAAQRKVIAEKFAQALVSSLQS.

The protein belongs to the UPF0352 family.

The sequence is that of UPF0352 protein VCM66_1964 from Vibrio cholerae serotype O1 (strain M66-2).